Consider the following 460-residue polypeptide: uncharacterized protein (460 aa).

Positions 1–33 (MKESNSRREFLSQSGKMVTAAALFGTSVPLAHA) form a signal peptide, tat-type signal.

Belongs to the metallo-dependent hydrolases superfamily. Post-translationally, exported by the Tat system. The position of the signal peptide cleavage has not been experimentally proven. Can also be exported by the Sec system.

This is an uncharacterized protein from Escherichia coli (strain K12).